Reading from the N-terminus, the 557-residue chain is Hdr-like menaquinol oxidoreductase iron-sulfur subunit (557 aa).

2 consecutive 4Fe-4S ferredoxin-type domains span residues 86–115 and 155–184; these read RAFKVFMDICVRCGACADKCHYYIGTGDPK and KEWYYYLLQCSLCRRCSLFCPYGIDTAEVV. 8 residues coordinate [4Fe-4S] cluster: C95, C98, C101, C105, C164, C167, C170, and C174.

It depends on [4Fe-4S] cluster as a cofactor.

The protein localises to the membrane. Its function is as follows. Has menaquinol-oxidizing activity. The HmeC and HmeD subunits may together mediate electron transfer from menaquinol to an unidentified electron acceptor on the cytoplasmic side of the membrane. The chain is Hdr-like menaquinol oxidoreductase iron-sulfur subunit (hmeD) from Archaeoglobus profundus (strain DSM 5631 / JCM 9629 / NBRC 100127 / Av18).